A 566-amino-acid chain; its full sequence is Endoglucanase G (566 aa).

An N-terminal signal peptide occupies residues Met1 to Ala30. Glu226 acts as the Proton donor in catalysis. The active-site Nucleophile is Glu381. Residues Gly473–Ser494 form a disordered region. Over residues Thr474–Ser494 the composition is skewed to low complexity. The Dockerin domain maps to Pro497–His564.

It belongs to the glycosyl hydrolase 5 (cellulase A) family.

It catalyses the reaction Endohydrolysis of (1-&gt;4)-beta-D-glucosidic linkages in cellulose, lichenin and cereal beta-D-glucans.. This enzyme catalyzes the endohydrolysis of 1,4-beta-glucosidic linkages in cellulose, lichenin and cereal beta-D-glucans. The chain is Endoglucanase G (celG) from Acetivibrio thermocellus (strain ATCC 27405 / DSM 1237 / JCM 9322 / NBRC 103400 / NCIMB 10682 / NRRL B-4536 / VPI 7372) (Clostridium thermocellum).